Here is a 142-residue protein sequence, read N- to C-terminus: Deoxyuridine 5'-triphosphate nucleotidohydrolase (142 aa).

Residues 62 to 64, asparagine 75, and 79 to 81 contribute to the substrate site; these read RSG and TID.

It belongs to the dUTPase family. It depends on Mg(2+) as a cofactor.

The enzyme catalyses dUTP + H2O = dUMP + diphosphate + H(+). It functions in the pathway pyrimidine metabolism; dUMP biosynthesis; dUMP from dCTP (dUTP route): step 2/2. In terms of biological role, this enzyme is involved in nucleotide metabolism: it produces dUMP, the immediate precursor of thymidine nucleotides and it decreases the intracellular concentration of dUTP so that uracil cannot be incorporated into DNA. This chain is Deoxyuridine 5'-triphosphate nucleotidohydrolase, found in Crocosphaera subtropica (strain ATCC 51142 / BH68) (Cyanothece sp. (strain ATCC 51142)).